Reading from the N-terminus, the 59-residue chain is UPF0434 protein Pnec_0311 (59 aa).

This sequence belongs to the UPF0434 family.

In Polynucleobacter necessarius subsp. necessarius (strain STIR1), this protein is UPF0434 protein Pnec_0311.